Reading from the N-terminus, the 394-residue chain is Na(+)/H(+) antiporter NhaA (394 aa).

The next 11 helical transmembrane spans lie at 17 to 37 (ILLMVAVALAMILANSPLAGV), 59 to 79 (LLLWINDGLMALFFLLIGLEV), 95 to 115 (SLPSIAAIGGMVFPALFYLAF), 124 to 144 (VGWAIPAATDIAFALGIMALL), 154 to 174 (VFLLALAIIDDLGVIVIIALF), 177 to 197 (TDLSMTSLVIAAVSIVLMVAL), 213 to 233 (FILWVAVLKSGVHATLAGVII), 261 to 281 (FMILPVFAFANAGLSLTNMTL), 287 to 307 (PITLGIIMGLLLGKPIGVLLF), 328 to 348 (IIPVAVMCGIGFTMSVFIASL), and 363 to 383 (LGILTGSLLAALIGYFWLAKV).

This sequence belongs to the NhaA Na(+)/H(+) (TC 2.A.33) antiporter family.

The protein resides in the cell inner membrane. It carries out the reaction Na(+)(in) + 2 H(+)(out) = Na(+)(out) + 2 H(+)(in). Functionally, na(+)/H(+) antiporter that extrudes sodium in exchange for external protons. In Shewanella frigidimarina (strain NCIMB 400), this protein is Na(+)/H(+) antiporter NhaA.